The following is a 134-amino-acid chain: Phosphoribosyl-AMP cyclohydrolase (134 aa).

A Mg(2+)-binding site is contributed by D80. Zn(2+) is bound at residue C81. 2 residues coordinate Mg(2+): D82 and D84. Positions 98 and 105 each coordinate Zn(2+).

The protein belongs to the PRA-CH family. As to quaternary structure, homodimer. It depends on Mg(2+) as a cofactor. Zn(2+) serves as cofactor.

The protein resides in the cytoplasm. The enzyme catalyses 1-(5-phospho-beta-D-ribosyl)-5'-AMP + H2O = 1-(5-phospho-beta-D-ribosyl)-5-[(5-phospho-beta-D-ribosylamino)methylideneamino]imidazole-4-carboxamide. It participates in amino-acid biosynthesis; L-histidine biosynthesis; L-histidine from 5-phospho-alpha-D-ribose 1-diphosphate: step 3/9. Functionally, catalyzes the hydrolysis of the adenine ring of phosphoribosyl-AMP. This is Phosphoribosyl-AMP cyclohydrolase from Janthinobacterium sp. (strain Marseille) (Minibacterium massiliensis).